The sequence spans 79 residues: Large ribosomal subunit protein uL22 (79 aa).

The protein belongs to the universal ribosomal protein uL22 family. As to quaternary structure, part of the 50S ribosomal subunit.

Its function is as follows. This protein binds specifically to 23S rRNA; its binding is stimulated by other ribosomal proteins, e.g. L4, L17, and L20. It is important during the early stages of 50S assembly. It makes multiple contacts with different domains of the 23S rRNA in the assembled 50S subunit and ribosome. In terms of biological role, the globular domain of the protein is located near the polypeptide exit tunnel on the outside of the subunit, while an extended beta-hairpin is found that lines the wall of the exit tunnel in the center of the 70S ribosome. The sequence is that of Large ribosomal subunit protein uL22 (rplV) from Prunus armeniaca phytoplasma.